Reading from the N-terminus, the 176-residue chain is Large ribosomal subunit protein uL6 (176 aa).

This sequence belongs to the universal ribosomal protein uL6 family. In terms of assembly, part of the 50S ribosomal subunit.

Its function is as follows. This protein binds to the 23S rRNA, and is important in its secondary structure. It is located near the subunit interface in the base of the L7/L12 stalk, and near the tRNA binding site of the peptidyltransferase center. This Burkholderia lata (strain ATCC 17760 / DSM 23089 / LMG 22485 / NCIMB 9086 / R18194 / 383) protein is Large ribosomal subunit protein uL6.